The chain runs to 464 residues: MAVYNYDVVVLGSGPAGEGAAMNAAKAGRKVAMVDSRRQVGGNCTHLGTIPSKALRHSVRQIMQFNTNPMFRAIGEPRWFSFPDVLKSAEKVISKQVASRTGYYARNRVDLFFGTGSFADEQTVEVVCPNGVVEKLNAKHIIIATGSRPYRPADIDFHHPRVYDSDTILSLSHTPRKLIVYGAGVIGCEYASIFSGLGVLVELVDNRGQLLSFLDSEISQALSYHFSNNNITVRHNEDYERVEGLDNGVILHLKSGKKIKADALLWCNGRTGNTDKLGLENIGIKVNSRGQIEVDEAYRTSVPNIYGAGDVIGWPSLASAAHDQGRSAAGSIVDNGSWRFVNDVPTGIYTIPEISSIGKNEQELTQAKVPYEVGKAFFKSMARAQIAGEPQGMLKILFHRETLEILGVHCFGYQASEIVHIGQAVMNQPGELNNLKYFVNTTFNYPTMAEAYRVAAYDGLNRLF.

An FAD-binding site is contributed by 35 to 44 (DSRRQVGGNC).

Belongs to the class-I pyridine nucleotide-disulfide oxidoreductase family. Requires FAD as cofactor.

The protein localises to the cytoplasm. The enzyme catalyses NAD(+) + NADPH = NADH + NADP(+). Conversion of NADPH, generated by peripheral catabolic pathways, to NADH, which can enter the respiratory chain for energy generation. This Pseudomonas putida (strain W619) protein is Soluble pyridine nucleotide transhydrogenase.